We begin with the raw amino-acid sequence, 59 residues long: Large ribosomal subunit protein bL32 (59 aa).

The tract at residues 1–59 (MAVQQNRKSRSRRGMRRSHDALSSAALSIDPTTGEKHRRHHVTPDGFYRGKKVVEVSQD) is disordered. The span at 7-16 (RKSRSRRGMR) shows a compositional bias: basic residues.

This sequence belongs to the bacterial ribosomal protein bL32 family.

The sequence is that of Large ribosomal subunit protein bL32 from Hahella chejuensis (strain KCTC 2396).